Consider the following 141-residue polypeptide: NADH-quinone oxidoreductase subunit A (141 aa).

Helical transmembrane passes span 24–44, 77–97, and 106–126; these read LLAL…LLLA, VPFY…AFIA, and LGWA…VALI.

The protein belongs to the complex I subunit 3 family. In terms of assembly, NDH-1 is composed of 14 different subunits. Subunits NuoA, H, J, K, L, M, N constitute the membrane sector of the complex.

It is found in the cell inner membrane. It carries out the reaction a quinone + NADH + 5 H(+)(in) = a quinol + NAD(+) + 4 H(+)(out). In terms of biological role, NDH-1 shuttles electrons from NADH, via FMN and iron-sulfur (Fe-S) centers, to quinones in the respiratory chain. The immediate electron acceptor for the enzyme in this species is believed to be ubiquinone. Couples the redox reaction to proton translocation (for every two electrons transferred, four hydrogen ions are translocated across the cytoplasmic membrane), and thus conserves the redox energy in a proton gradient. In Syntrophotalea carbinolica (strain DSM 2380 / NBRC 103641 / GraBd1) (Pelobacter carbinolicus), this protein is NADH-quinone oxidoreductase subunit A.